The following is a 1387-amino-acid chain: Kinesin-like protein KIF15 (1387 aa).

The interval 1-23 is disordered; that stretch reads MAPGCKSELRNVTNSHSNQPSNE. The segment covering 10–22 has biased composition (polar residues); it reads RNVTNSHSNQPSN. The 338-residue stretch at 26–363 folds into the Kinesin motor domain; it reads AIKVFVRIRP…LNFAQRAKLI (338 aa). 109 to 116 contributes to the ATP binding site; it reads GQTGSGKT. Residues 368–1132 adopt a coiled-coil conformation; sequence VVNEDTQGNV…LKMRQLEHVM (765 aa). A Phosphoserine modification is found at S568. Residue K1009 is modified to N6-acetyllysine. S1141 and S1169 each carry phosphoserine.

The protein belongs to the TRAFAC class myosin-kinesin ATPase superfamily. Kinesin family. KLP2 subfamily. In terms of assembly, interacts with MKI67 and TPX2. Expressed in brain (neurons in the external germinal layer of the cerebellum and in ventricular zones) (at protein level). Expressed in spleen and testis.

The protein localises to the cytoplasm. It is found in the cytoskeleton. The protein resides in the spindle. Plus-end directed kinesin-like motor enzyme involved in mitotic spindle assembly. The protein is Kinesin-like protein KIF15 (Kif15) of Mus musculus (Mouse).